A 262-amino-acid chain; its full sequence is tRNA (guanine-N(1)-)-methyltransferase (262 aa).

S-adenosyl-L-methionine contacts are provided by residues glycine 113 and 137-142; that span reads IGDYVL.

It belongs to the RNA methyltransferase TrmD family. As to quaternary structure, homodimer.

The protein localises to the cytoplasm. It carries out the reaction guanosine(37) in tRNA + S-adenosyl-L-methionine = N(1)-methylguanosine(37) in tRNA + S-adenosyl-L-homocysteine + H(+). Its function is as follows. Specifically methylates guanosine-37 in various tRNAs. The polypeptide is tRNA (guanine-N(1)-)-methyltransferase (Thermobifida fusca (strain YX)).